Here is a 443-residue protein sequence, read N- to C-terminus: Probable D-serine dehydratase (443 aa).

The residue at position 118 (Lys-118) is an N6-(pyridoxal phosphate)lysine.

This sequence belongs to the serine/threonine dehydratase family. DsdA subfamily. The cofactor is pyridoxal 5'-phosphate.

The enzyme catalyses D-serine = pyruvate + NH4(+). The chain is Probable D-serine dehydratase from Colwellia psychrerythraea (strain 34H / ATCC BAA-681) (Vibrio psychroerythus).